The chain runs to 163 residues: Putative 4-hydroxy-4-methyl-2-oxoglutarate aldolase (163 aa).

Residues 79–82 (GDQL) and arginine 101 each bind substrate. Aspartate 102 lines the a divalent metal cation pocket.

This sequence belongs to the class II aldolase/RraA-like family. As to quaternary structure, homotrimer. A divalent metal cation is required as a cofactor.

The catalysed reaction is 4-hydroxy-4-methyl-2-oxoglutarate = 2 pyruvate. It carries out the reaction oxaloacetate + H(+) = pyruvate + CO2. Functionally, catalyzes the aldol cleavage of 4-hydroxy-4-methyl-2-oxoglutarate (HMG) into 2 molecules of pyruvate. Also contains a secondary oxaloacetate (OAA) decarboxylase activity due to the common pyruvate enolate transition state formed following C-C bond cleavage in the retro-aldol and decarboxylation reactions. The polypeptide is Putative 4-hydroxy-4-methyl-2-oxoglutarate aldolase (Dechloromonas aromatica (strain RCB)).